A 329-amino-acid polypeptide reads, in one-letter code: DNA-directed RNA polymerase subunit alpha (329 aa).

An alpha N-terminal domain (alpha-NTD) region spans residues 1-235; the sequence is MQGSVTEFLK…EQLEAFVDLR (235 aa). Residues 249 to 329 are alpha C-terminal domain (alpha-CTD); it reads FDPILLRPVD…NWPPASIADE (81 aa).

This sequence belongs to the RNA polymerase alpha chain family. Homodimer. The RNAP catalytic core consists of 2 alpha, 1 beta, 1 beta' and 1 omega subunit. When a sigma factor is associated with the core the holoenzyme is formed, which can initiate transcription.

The catalysed reaction is RNA(n) + a ribonucleoside 5'-triphosphate = RNA(n+1) + diphosphate. Functionally, DNA-dependent RNA polymerase catalyzes the transcription of DNA into RNA using the four ribonucleoside triphosphates as substrates. The protein is DNA-directed RNA polymerase subunit alpha of Shigella dysenteriae serotype 1 (strain Sd197).